The chain runs to 561 residues: MSTPANYTRVPLCEPEELPDDIQKENEYGTLDSPGHLYQVKSRHGKPLPEPVVDTPPYYISLLTYLNYLILIILGHVHDFLGMTFQKNKHLDLLEHDGLAPWFSNFESFYVRRIKMRIDDCFSRPTTGVPGRFIRCIDRISHNINEYFTYSGAVYPCMNLSSYNYLGFAQSKGQCTDAALESVDKYSIQSGGPRAQIGTTDLHIKAEKLVARFIGKEDALVFSMGYGTNANLFNAFLDKKCLVISDELNHTSIRTGVRLSGAAVRTFKHGDMVGLEKLIREQIVLGQPKTNRPWKKILICAEGLFSMEGTLCNLPKLVELKKKYKCYLFIDEAHSIGAMGPTGRGVCEIFGVDPKDVDILMGTFTKSFGAAGGYIAADQWIIDRLRLDLTTVSYSESMPAPVLAQTISSLQTISGEICPGQGTERLQRIAFNSRYLRLALQRLGFIVYGVADSPVIPLLLYCPSKMPAFSRMMLQRRIAVVVVAYPATPLIESRVRFCMSASLTKEDIDYLLRHVSEVGDKLNLKSNSGKSSYDGKRQRWDIEEVIRRTPEDCKDDKYFVN.

The helical transmembrane segment at 57-77 (PYYISLLTYLNYLILIILGHV) threads the bilayer. N6-(pyridoxal phosphate)lysine is present on Lys-366. The helical transmembrane segment at 443-463 (LGFIVYGVADSPVIPLLLYCP) threads the bilayer.

Belongs to the class-II pyridoxal-phosphate-dependent aminotransferase family. As to quaternary structure, LCB1 and LCB2 encode essential subunits of the enzyme and form a heterodimer. Component of the SPOTS complex, at least composed of LCB1/2 (LCB1 and/or LCB2), ORM1/2 (ORM1 and/or ORM2), SAC1 and TSC3. Interacts with LCB1 and TSC3. The cofactor is pyridoxal 5'-phosphate.

It localises to the cytoplasm. It is found in the endoplasmic reticulum. The protein localises to the membrane. The catalysed reaction is L-serine + hexadecanoyl-CoA + H(+) = 3-oxosphinganine + CO2 + CoA. It participates in lipid metabolism; sphingolipid metabolism. Catalytic subunit of serine palmitoyltransferase (SPT), which catalyzes the committed step in the synthesis of sphingolipids, the condensation of serine with palmitoyl CoA to form the long chain base 3-ketosphinganine. This chain is Serine palmitoyltransferase 2 (LCB2), found in Saccharomyces cerevisiae (strain ATCC 204508 / S288c) (Baker's yeast).